The following is a 1036-amino-acid chain: DNA-directed RNA polymerase subunit beta (1036 aa).

Belongs to the RNA polymerase beta chain family. In plastids the minimal PEP RNA polymerase catalytic core is composed of four subunits: alpha, beta, beta', and beta''. When a (nuclear-encoded) sigma factor is associated with the core the holoenzyme is formed, which can initiate transcription.

Its subcellular location is the plastid. The protein localises to the chloroplast. It catalyses the reaction RNA(n) + a ribonucleoside 5'-triphosphate = RNA(n+1) + diphosphate. DNA-dependent RNA polymerase catalyzes the transcription of DNA into RNA using the four ribonucleoside triphosphates as substrates. This Cyanidioschyzon merolae (strain NIES-3377 / 10D) (Unicellular red alga) protein is DNA-directed RNA polymerase subunit beta.